A 423-amino-acid chain; its full sequence is Imidazolonepropionase (423 aa).

His-80 and His-82 together coordinate Fe(3+). The Zn(2+) site is built by His-80 and His-82. Positions 89, 152, and 185 each coordinate 4-imidazolone-5-propanoate. Residue Tyr-152 coordinates N-formimidoyl-L-glutamate. Residue His-250 coordinates Fe(3+). Residue His-250 participates in Zn(2+) binding. Gln-253 provides a ligand contact to 4-imidazolone-5-propanoate. Residue Asp-325 participates in Fe(3+) binding. Asp-325 is a binding site for Zn(2+). N-formimidoyl-L-glutamate contacts are provided by Asn-327 and Gly-329. Position 330 (Thr-330) interacts with 4-imidazolone-5-propanoate.

It belongs to the metallo-dependent hydrolases superfamily. HutI family. Zn(2+) serves as cofactor. Requires Fe(3+) as cofactor.

Its subcellular location is the cytoplasm. The catalysed reaction is 4-imidazolone-5-propanoate + H2O = N-formimidoyl-L-glutamate. Its pathway is amino-acid degradation; L-histidine degradation into L-glutamate; N-formimidoyl-L-glutamate from L-histidine: step 3/3. In terms of biological role, catalyzes the hydrolytic cleavage of the carbon-nitrogen bond in imidazolone-5-propanoate to yield N-formimidoyl-L-glutamate. It is the third step in the universal histidine degradation pathway. This Cupriavidus pinatubonensis (strain JMP 134 / LMG 1197) (Cupriavidus necator (strain JMP 134)) protein is Imidazolonepropionase.